Consider the following 213-residue polypeptide: ATP synthase peripheral stalk subunit OSCP, mitochondrial (213 aa).

The transit peptide at 1 to 23 (MAAPAVSGFSRQVRCFSTSVVRP) directs the protein to the mitochondrion. The SIFI-degron signature appears at 5-23 (AVSGFSRQVRCFSTSVVRP). Lys-54, Lys-60, Lys-70, and Lys-73 each carry N6-acetyllysine. An N6-succinyllysine modification is found at Lys-90. Residues Lys-100 and Lys-158 each carry the N6-acetyllysine; alternate modification. N6-succinyllysine; alternate occurs at positions 100 and 158. N6-acetyllysine is present on residues Lys-172, Lys-176, and Lys-192. At Lys-199 the chain carries N6-succinyllysine.

Belongs to the ATPase delta chain family. Component of the ATP synthase complex composed at least of ATP5F1A/subunit alpha, ATP5F1B/subunit beta, ATP5MC1/subunit c (homooctomer), MT-ATP6/subunit a, MT-ATP8/subunit 8, ATP5ME/subunit e, ATP5MF/subunit f, ATP5MG/subunit g, ATP5MK/subunit k, ATP5MJ/subunit j, ATP5F1C/subunit gamma, ATP5F1D/subunit delta, ATP5F1E/subunit epsilon, ATP5PF/subunit F6, ATP5PB/subunit b, ATP5PD/subunit d, ATP5PO/subunit OSCP. ATP synthase complex consists of a soluble F(1) head domain (subunits alpha(3) and beta(3)) - the catalytic core - and a membrane F(0) domain - the membrane proton channel (subunits c, a, 8, e, f, g, k and j). These two domains are linked by a central stalk (subunits gamma, delta, and epsilon) rotating inside the F1 region and a stationary peripheral stalk (subunits F6, b, d, and OSCP). In response to mitochondrial stress, the precursor protein is ubiquitinated by the SIFI complex in the cytoplasm before mitochondrial import, leading to its degradation. Within the SIFI complex, UBR4 initiates ubiquitin chain that are further elongated or branched by KCMF1.

It localises to the mitochondrion. The protein localises to the mitochondrion inner membrane. Subunit OSCP, of the mitochondrial membrane ATP synthase complex (F(1)F(0) ATP synthase or Complex V) that produces ATP from ADP in the presence of a proton gradient across the membrane which is generated by electron transport complexes of the respiratory chain. ATP synthase complex consist of a soluble F(1) head domain - the catalytic core - and a membrane F(1) domain - the membrane proton channel. These two domains are linked by a central stalk rotating inside the F(1) region and a stationary peripheral stalk. During catalysis, ATP synthesis in the catalytic domain of F(1) is coupled via a rotary mechanism of the central stalk subunits to proton translocation. In vivo, can only synthesize ATP although its ATP hydrolase activity can be activated artificially in vitro. Part of the complex F(0) domain. Part of the complex F(0) domain and the peripheric stalk, which acts as a stator to hold the catalytic alpha(3)beta(3) subcomplex and subunit a/ATP6 static relative to the rotary elements. The polypeptide is ATP synthase peripheral stalk subunit OSCP, mitochondrial (Rhinolophus ferrumequinum (Greater horseshoe bat)).